We begin with the raw amino-acid sequence, 569 residues long: 3-(3-hydroxy-phenyl)propionate/3-hydroxycinnamic acid hydroxylase (569 aa).

FAD-binding positions include 12-41 (DVVVVGAGPSGLTLANILGLQGVATLVVDE) and 277-287 (FRKGRLMLAGD).

Belongs to the PheA/TfdB FAD monooxygenase family. Requires FAD as cofactor.

It catalyses the reaction 3-(3-hydroxyphenyl)propanoate + NADH + O2 + H(+) = 3-(2,3-dihydroxyphenyl)propanoate + NAD(+) + H2O. The catalysed reaction is (2E)-3-(3-hydroxyphenyl)prop-2-enoate + NADH + O2 + H(+) = (2E)-3-(2,3-dihydroxyphenyl)prop-2-enoate + NAD(+) + H2O. It participates in aromatic compound metabolism; 3-phenylpropanoate degradation. In terms of biological role, catalyzes the insertion of one atom of molecular oxygen into position 2 of the phenyl ring of 3-(3-hydroxyphenyl)propionate (3-HPP) and hydroxycinnamic acid (3HCI). In Mycolicibacterium vanbaalenii (strain DSM 7251 / JCM 13017 / BCRC 16820 / KCTC 9966 / NRRL B-24157 / PYR-1) (Mycobacterium vanbaalenii), this protein is 3-(3-hydroxy-phenyl)propionate/3-hydroxycinnamic acid hydroxylase.